Here is a 51-residue protein sequence, read N- to C-terminus: Large ribosomal subunit protein bL33 (51 aa).

It belongs to the bacterial ribosomal protein bL33 family.

The polypeptide is Large ribosomal subunit protein bL33 (Psychrobacter sp. (strain PRwf-1)).